The chain runs to 151 residues: 3-hydroxyacyl-[acyl-carrier-protein] dehydratase FabZ (151 aa).

The active site involves His-49.

The protein belongs to the thioester dehydratase family. FabZ subfamily.

It is found in the cytoplasm. The enzyme catalyses a (3R)-hydroxyacyl-[ACP] = a (2E)-enoyl-[ACP] + H2O. Involved in unsaturated fatty acids biosynthesis. Catalyzes the dehydration of short chain beta-hydroxyacyl-ACPs and long chain saturated and unsaturated beta-hydroxyacyl-ACPs. This is 3-hydroxyacyl-[acyl-carrier-protein] dehydratase FabZ from Bordetella parapertussis (strain 12822 / ATCC BAA-587 / NCTC 13253).